We begin with the raw amino-acid sequence, 404 residues long: S-adenosylmethionine synthase (404 aa).

Histidine 17 serves as a coordination point for ATP. A Mg(2+)-binding site is contributed by aspartate 19. A K(+)-binding site is contributed by glutamate 45. Residues glutamate 58 and glutamine 101 each contribute to the L-methionine site. The flexible loop stretch occupies residues 101–111 (QSADINRGVDR). ATP contacts are provided by residues 172–174 (DAK), 245–246 (RF), aspartate 254, 260–261 (RK), alanine 277, and lysine 281. Aspartate 254 lines the L-methionine pocket. L-methionine is bound at residue lysine 285.

Belongs to the AdoMet synthase family. In terms of assembly, homotetramer; dimer of dimers. The cofactor is Mg(2+). K(+) serves as cofactor.

It is found in the cytoplasm. It carries out the reaction L-methionine + ATP + H2O = S-adenosyl-L-methionine + phosphate + diphosphate. The protein operates within amino-acid biosynthesis; S-adenosyl-L-methionine biosynthesis; S-adenosyl-L-methionine from L-methionine: step 1/1. Its function is as follows. Catalyzes the formation of S-adenosylmethionine (AdoMet) from methionine and ATP. The overall synthetic reaction is composed of two sequential steps, AdoMet formation and the subsequent tripolyphosphate hydrolysis which occurs prior to release of AdoMet from the enzyme. In Chlorobium luteolum (strain DSM 273 / BCRC 81028 / 2530) (Pelodictyon luteolum), this protein is S-adenosylmethionine synthase.